We begin with the raw amino-acid sequence, 547 residues long: MGFEELLDKVGGFGPFQLRNVALLALPRVLLPMHFLLPIFLAAVPAHRCALPGVPDNFSNEDAWLEAHLPREPDGRLSACLRFTHPQALPNSTLWGEGQNSGEQPEGEPSTVPCPQGWEYNHSEFSSTIATEWDLVCEQKGLNKAISTFFFAGVLVGAEVYGYLSDRFGRRRLLLVAYVSSLALGLASAASVSYIMFAITRTLTGMALAGFTIIVMPLELEWLDVRHRTVAGVLSSTFWTGGVMLLALIGYLIRDWRWLLLTVTLPCVPGILTLWWVPESARWLLTQGRVEEAHRYLLRCARLNGPPVGEDSLSREALNKVAAAERMVRRPSYLDLFRTPRLRYISLCCMVVWFGVNFSYYGVSLDLSGLGLNVYLTQLVFGAVELPSKLLVYLSVRHAGRRLTMAGTLLGAALAVGLRILVSPEMKSWSTALAVMGKAFSEAAFTTAYLFTSELYPTVLRQTGMGLTALVGRLGGSLAPLAALLDGVWLSLPKLAYGGIALLAACTALLLPETKQAQLPETIQDVERKSAPSSLQEEEMPMKQVQD.

A helical transmembrane segment spans residues valine 21–leucine 41. Residues asparagine 91–glutamate 103 are compositionally biased toward polar residues. The disordered stretch occupies residues asparagine 91–valine 112. The next 11 membrane-spanning stretches (helical) occupy residues alanine 145 to serine 165, valine 179 to isoleucine 199, leucine 203 to leucine 223, valine 233 to isoleucine 253, tryptophan 258 to proline 278, isoleucine 345 to leucine 365, leucine 367 to proline 387, leucine 403 to serine 423, threonine 431 to phenylalanine 451, methionine 465 to leucine 485, and leucine 492 to proline 512. The interval glutamate 521–aspartate 547 is disordered.

The protein belongs to the major facilitator (TC 2.A.1) superfamily. Organic cation transporter (TC 2.A.1.19) family.

Its subcellular location is the basolateral cell membrane. The protein localises to the apical cell membrane. The protein resides in the cell membrane. The enzyme catalyses orotate(out) + L-glutamate(in) = orotate(in) + L-glutamate(out). It carries out the reaction 3',5'-cyclic GMP(in) = 3',5'-cyclic GMP(out). The catalysed reaction is GMP(in) = GMP(out). It catalyses the reaction 2'-deoxyguanosine(in) = 2'-deoxyguanosine(out). The enzyme catalyses GDP(in) = GDP(out). It carries out the reaction guanosine(in) = guanosine(out). The catalysed reaction is GTP(in) = GTP(out). It catalyses the reaction 3',5'-cyclic AMP(in) = 3',5'-cyclic AMP(out). The enzyme catalyses creatinine(in) = creatinine(out). It carries out the reaction prostaglandin E2(out) = prostaglandin E2(in). The catalysed reaction is 2-oxoglutarate(in) = 2-oxoglutarate(out). It catalyses the reaction glutarate(in) = glutarate(out). The enzyme catalyses urate(out) = urate(in). It carries out the reaction estrone 3-sulfate(out) = estrone 3-sulfate(in). In terms of biological role, functions as a Na(+)-independent bidirectional multispecific transporter. Contributes to the renal and hepatic elimination of endogenous organic compounds from the systemic circulation into the urine and bile, respectively. Capable of transporting a wide range of purine and pyrimidine nucleobases, nucleosides and nucleotides, with cGMP, 2'deoxyguanosine and GMP being the preferred substrates. Functions as a pH- and chloride-independent cGMP bidirectional facilitative transporter that can regulate both intracellular and extracellular levels of cGMP and may be involved in cGMP signaling pathways. Mediates orotate/glutamate bidirectional exchange and most likely display a physiological role in hepatic release of glutamate into the blood. Involved in renal secretion and possible reabsorption of creatinine. Able to uptake prostaglandin E2 (PGE2) and may contribute to PGE2 renal excretion. Also transports alpha-ketoglutarate and urate. Apart from the orotate/glutamate exchange, the counterions for the uptake of other SLC22A7/OAT2 substrates remain to be identified. The protein is Solute carrier family 22 member 7 (SLC22A7) of Bos taurus (Bovine).